A 500-amino-acid chain; its full sequence is Glycerol kinase (500 aa).

Thr-12 is a binding site for ADP. Residues Thr-12, Thr-13, and Ser-14 each contribute to the ATP site. Thr-12 lines the sn-glycerol 3-phosphate pocket. Arg-16 contributes to the ADP binding site. The sn-glycerol 3-phosphate site is built by Arg-82, Glu-83, Tyr-134, and Asp-246. The glycerol site is built by Arg-82, Glu-83, Tyr-134, Asp-246, and Gln-247. Residues Thr-268 and Gly-312 each contribute to the ADP site. Residues Thr-268, Gly-312, Gln-316, and Gly-413 each contribute to the ATP site. Residues Gly-413 and Asn-417 each contribute to the ADP site.

This sequence belongs to the FGGY kinase family.

The enzyme catalyses glycerol + ATP = sn-glycerol 3-phosphate + ADP + H(+). It functions in the pathway polyol metabolism; glycerol degradation via glycerol kinase pathway; sn-glycerol 3-phosphate from glycerol: step 1/1. Its activity is regulated as follows. Inhibited by fructose 1,6-bisphosphate (FBP). Key enzyme in the regulation of glycerol uptake and metabolism. Catalyzes the phosphorylation of glycerol to yield sn-glycerol 3-phosphate. The protein is Glycerol kinase of Saccharopolyspora erythraea (strain ATCC 11635 / DSM 40517 / JCM 4748 / NBRC 13426 / NCIMB 8594 / NRRL 2338).